A 417-amino-acid polypeptide reads, in one-letter code: N-acetylmuramoyl-L-alanine amidase AmiC (417 aa).

The tat-type signal signal peptide spans 1-31; the sequence is MSGSNTAISRRRLLQGAGAMWLLSVSQVSLA. The tract at residues 166-185 is disordered; that stretch reads LEKQVPPAQSGPQPGKAGRD. Residues 190–404 enclose the MurNAc-LAA domain; that stretch reads IMLDPGHGGE…VAESILAGIK (215 aa).

It belongs to the N-acetylmuramoyl-L-alanine amidase 3 family. Post-translationally, predicted to be exported by the Tat system. The position of the signal peptide cleavage has not been experimentally proven.

The protein resides in the periplasm. The enzyme catalyses Hydrolyzes the link between N-acetylmuramoyl residues and L-amino acid residues in certain cell-wall glycopeptides.. In terms of biological role, cell-wall hydrolase involved in septum cleavage during cell division. The polypeptide is N-acetylmuramoyl-L-alanine amidase AmiC (amiC) (Escherichia coli O6:H1 (strain CFT073 / ATCC 700928 / UPEC)).